The primary structure comprises 120 residues: Large ribosomal subunit protein uL18 (120 aa).

The protein belongs to the universal ribosomal protein uL18 family. In terms of assembly, part of the 50S ribosomal subunit; part of the 5S rRNA/L5/L18/L25 subcomplex. Contacts the 5S and 23S rRNAs.

Functionally, this is one of the proteins that bind and probably mediate the attachment of the 5S RNA into the large ribosomal subunit, where it forms part of the central protuberance. This chain is Large ribosomal subunit protein uL18, found in Staphylococcus carnosus (strain TM300).